We begin with the raw amino-acid sequence, 512 residues long: tRNA-2-methylthio-N(6)-dimethylallyladenosine synthase (512 aa).

Residues 23 to 139 (RTYQVRTYGC…LPTLLERARH (117 aa)) enclose the MTTase N-terminal domain. The [4Fe-4S] cluster site is built by C32, C68, C102, C176, C180, and C183. Positions 162–398 (RESAYAAWVS…IELQERISLE (237 aa)) constitute a Radical SAM core domain. One can recognise a TRAM domain in the interval 401-469 (REQVGRAVEL…PHHLIADAPI (69 aa)). A disordered region spans residues 477-512 (AGDAHAAGQKPRTGVGLGMPRIGAPAPSATAEGCGC).

This sequence belongs to the methylthiotransferase family. MiaB subfamily. In terms of assembly, monomer. It depends on [4Fe-4S] cluster as a cofactor.

Its subcellular location is the cytoplasm. It carries out the reaction N(6)-dimethylallyladenosine(37) in tRNA + (sulfur carrier)-SH + AH2 + 2 S-adenosyl-L-methionine = 2-methylsulfanyl-N(6)-dimethylallyladenosine(37) in tRNA + (sulfur carrier)-H + 5'-deoxyadenosine + L-methionine + A + S-adenosyl-L-homocysteine + 2 H(+). Functionally, catalyzes the methylthiolation of N6-(dimethylallyl)adenosine (i(6)A), leading to the formation of 2-methylthio-N6-(dimethylallyl)adenosine (ms(2)i(6)A) at position 37 in tRNAs that read codons beginning with uridine. The protein is tRNA-2-methylthio-N(6)-dimethylallyladenosine synthase of Mycolicibacterium smegmatis (strain ATCC 700084 / mc(2)155) (Mycobacterium smegmatis).